Consider the following 190-residue polypeptide: RNA pyrophosphohydrolase (190 aa).

In terms of domain architecture, Nudix hydrolase spans 6 to 149 (GYRPNVGIIL…KRDVYTQALN (144 aa)). A Nudix box motif is present at residues 38 to 59 (GGIKYGESPVQAMYRELHEEVG). The disordered stretch occupies residues 167-190 (QRVHGPRSTDSPSSETDGHAHIAG).

The protein belongs to the Nudix hydrolase family. RppH subfamily. The cofactor is a divalent metal cation.

In terms of biological role, accelerates the degradation of transcripts by removing pyrophosphate from the 5'-end of triphosphorylated RNA, leading to a more labile monophosphorylated state that can stimulate subsequent ribonuclease cleavage. In Bordetella pertussis (strain Tohama I / ATCC BAA-589 / NCTC 13251), this protein is RNA pyrophosphohydrolase.